Consider the following 312-residue polypeptide: Apolipoprotein E (312 aa).

The N-terminal stretch at 1-18 (MKALWALLLVPLLTGCLA) is a signal peptide. 8 consecutive repeat copies span residues 72-93 (VLME…EQLG), 94-115 (PVAE…ARLG), 116-137 (ADME…TMLG), 138-159 (QSTE…KRLM), 160-181 (RDAD…EGAE), 182-203 (RGVS…QRTA), 204-225 (NLGS…DRIR), and 226-247 (GRLE…DQME). The interval 72-247 (VLMEDTMTEV…RLEEVRDQME (176 aa)) is 8 X 22 AA approximate tandem repeats. Residue Met135 is modified to Methionine sulfoxide. The residue at position 139 (Ser139) is a Phosphoserine. The segment at 150 to 160 (HLRKMRKRLMR) is LDL and other lipoprotein receptors binding. The LDL receptor binding stretch occupies residues 150-160 (HLRKMRKRLMR). Position 154–157 (154–157 (MRKR)) interacts with heparin. Positions 202 to 282 (TANLGSGAAQ…GWFEPLVEDM (81 aa)) are lipid-binding and lipoprotein association. A heparin-binding site is contributed by 221-228 (SDRIRGRL). Residues 258-312 (QQIRLQAEVFQARLKGWFEPLVEDMQRQWANLMEKIQASVATNSIASTTVPLENQ) are homooligomerization. Positions 270 to 282 (RLKGWFEPLVEDM) are specificity for association with VLDL.

The protein belongs to the apolipoprotein A1/A4/E family. Homotetramer. May interact with ABCA1; functionally associated with ABCA1 in the biogenesis of HDLs. May interact with APP/A4 amyloid-beta peptide; the interaction is extremely stable in vitro but its physiological significance is unclear. May interact with MAPT. May interact with MAP2. In the cerebrospinal fluid, interacts with secreted SORL1. Interacts with PMEL; this allows the loading of PMEL luminal fragment on ILVs to induce fibril nucleation. Post-translationally, APOE exists as multiple glycosylated and sialylated glycoforms within cells and in plasma. The extent of glycosylation and sialylation are tissue and context specific. In terms of processing, glycated in plasma VLDL. Phosphorylated by FAM20C in the extracellular medium.

The protein localises to the secreted. It is found in the extracellular space. It localises to the extracellular matrix. The protein resides in the extracellular vesicle. Its subcellular location is the endosome. The protein localises to the multivesicular body. APOE is an apolipoprotein, a protein associating with lipid particles, that mainly functions in lipoprotein-mediated lipid transport between organs via the plasma and interstitial fluids. APOE is a core component of plasma lipoproteins and is involved in their production, conversion and clearance. Apolipoproteins are amphipathic molecules that interact both with lipids of the lipoprotein particle core and the aqueous environment of the plasma. As such, APOE associates with chylomicrons, chylomicron remnants, very low density lipoproteins (VLDL) and intermediate density lipoproteins (IDL) but shows a preferential binding to high-density lipoproteins (HDL). It also binds a wide range of cellular receptors including the LDL receptor/LDLR, the LDL receptor-related proteins LRP1, LRP2 and LRP8 and the very low-density lipoprotein receptor/VLDLR that mediate the cellular uptake of the APOE-containing lipoprotein particles. Finally, APOE also has a heparin-binding activity and binds heparan-sulfate proteoglycans on the surface of cells, a property that supports the capture and the receptor-mediated uptake of APOE-containing lipoproteins by cells. A main function of APOE is to mediate lipoprotein clearance through the uptake of chylomicrons, VLDLs, and HDLs by hepatocytes. APOE is also involved in the biosynthesis by the liver of VLDLs as well as their uptake by peripheral tissues ensuring the delivery of triglycerides and energy storage in muscle, heart and adipose tissues. By participating in the lipoprotein-mediated distribution of lipids among tissues, APOE plays a critical role in plasma and tissues lipid homeostasis. APOE is also involved in two steps of reverse cholesterol transport, the HDLs-mediated transport of cholesterol from peripheral tissues to the liver, and thereby plays an important role in cholesterol homeostasis. First, it is functionally associated with ABCA1 in the biogenesis of HDLs in tissues. Second, it is enriched in circulating HDLs and mediates their uptake by hepatocytes. APOE also plays an important role in lipid transport in the central nervous system, regulating neuron survival and sprouting. The chain is Apolipoprotein E (Apoe) from Rattus rattus (Black rat).